Reading from the N-terminus, the 186-residue chain is Tumor necrosis factor alpha-induced protein 8-like protein 1 (186 aa).

The protein belongs to the TNFAIP8 family.

Its subcellular location is the cytoplasm. The protein is Tumor necrosis factor alpha-induced protein 8-like protein 1 (TNFAIP8L1) of Gallus gallus (Chicken).